An 872-amino-acid chain; its full sequence is Exoglucanase A (872 aa).

Residues 1–40 form the signal peptide; sequence MSTLGKRAGVRRRVRAVATAATATALVAVPLTTLATSASA. A catalytic region spans residues 41 to 477; that stretch reads APVHVDNPYA…PVIGGTTPVE (437 aa). Disulfide bonds link Cys-140-Cys-202 and Cys-374-Cys-428. The active-site Proton donor is the Asp-188. Asp-410 (nucleophile) is an active-site residue. 3 Fibronectin type-III domains span residues 484–569, 579–667, and 677–765; these read VPTG…TQSG, VPAG…TQTG, and VPTG…TQAA. The region spanning 763 to 872 is the CBM2 domain; it reads QAATSGGCTV…TLNGVACTLG (110 aa). Cys-770 and Cys-869 are oxidised to a cystine.

It belongs to the glycosyl hydrolase 6 (cellulase B) family.

The enzyme catalyses Hydrolysis of (1-&gt;4)-beta-D-glucosidic linkages in cellulose and cellotetraose, releasing cellobiose from the non-reducing ends of the chains.. In terms of biological role, this enzyme hydrolyzes 1,4-beta-D-glucosidic linkages of cellulose. Weak activity against carboxymethylcellulose, bacterial microcrystalline cellulose and barley beta-glucan. Also has weak endoglucanase activity. Hydrolyzes glucosidic bonds with inversion of anomeric configuration. The chain is Exoglucanase A (cbhA) from Cellulomonas fimi (strain ATCC 484 / DSM 20113 / JCM 1341 / CCUG 24087 / LMG 16345 / NBRC 15513 / NCIMB 8980 / NCTC 7547 / NRS-133).